A 123-amino-acid polypeptide reads, in one-letter code: MKLVILLSFVATVAVFAAPSAPAGLEEKLRALQEQLYSLEKENGVDVKQKEQPAAADTFLGFVPQKRMVAWQPMKRSMINEDSRAPLLHAIEARLAEVLRAGERLGVNPEEVLADLRARNQFQ.

A signal peptide spans 1 to 17 (MKLVILLSFVATVAVFA). 3 propeptides span residues 30 to 31 (RA), 66 to 67 (KR), and 75 to 76 (KR).

In terms of tissue distribution, expressed in intestinal cells.

Its subcellular location is the secreted. The protein localises to the cytoplasmic vesicle. In terms of biological role, neuropeptide ligand for the G-protein coupled receptor aex-2. Activates and regulates the rhythmic calcium influx in DVB GABergic neurons during the defecation motor program, which is a coordinated series of three muscle contractions that occurs every 45 seconds. In Caenorhabditis elegans, this protein is Neuropeptide-like peptides nlp-40.